Here is a 111-residue protein sequence, read N- to C-terminus: Nucleoid-associated protein Clim_0875 (111 aa).

Belongs to the YbaB/EbfC family. As to quaternary structure, homodimer.

It is found in the cytoplasm. The protein resides in the nucleoid. Binds to DNA and alters its conformation. May be involved in regulation of gene expression, nucleoid organization and DNA protection. This Chlorobium limicola (strain DSM 245 / NBRC 103803 / 6330) protein is Nucleoid-associated protein Clim_0875.